Here is a 281-residue protein sequence, read N- to C-terminus: Pantothenate synthetase (281 aa).

30 to 37 is a binding site for ATP; the sequence is MGNLHQGH. The active-site Proton donor is the His37. Gln61 lines the (R)-pantoate pocket. Gln61 contacts beta-alanine. 149-152 contributes to the ATP binding site; the sequence is GNKD. (R)-pantoate is bound at residue Gln155. Residues Ile178 and 186-189 each bind ATP; that span reads MSSR.

Belongs to the pantothenate synthetase family. As to quaternary structure, homodimer.

It localises to the cytoplasm. It catalyses the reaction (R)-pantoate + beta-alanine + ATP = (R)-pantothenate + AMP + diphosphate + H(+). It functions in the pathway cofactor biosynthesis; (R)-pantothenate biosynthesis; (R)-pantothenate from (R)-pantoate and beta-alanine: step 1/1. Its function is as follows. Catalyzes the condensation of pantoate with beta-alanine in an ATP-dependent reaction via a pantoyl-adenylate intermediate. This chain is Pantothenate synthetase, found in Shewanella oneidensis (strain ATCC 700550 / JCM 31522 / CIP 106686 / LMG 19005 / NCIMB 14063 / MR-1).